A 295-amino-acid polypeptide reads, in one-letter code: Ethanolamine ammonia-lyase small subunit (295 aa).

Adenosylcob(III)alamin is bound by residues Val207, Glu228, and Cys258.

This sequence belongs to the EutC family. In terms of assembly, the basic unit is a heterodimer which dimerizes to form tetramers. The heterotetramers trimerize; 6 large subunits form a core ring with 6 small subunits projecting outwards. The cofactor is adenosylcob(III)alamin.

The protein resides in the bacterial microcompartment. The catalysed reaction is ethanolamine = acetaldehyde + NH4(+). The protein operates within amine and polyamine degradation; ethanolamine degradation. In terms of biological role, catalyzes the deamination of various vicinal amino-alcohols to oxo compounds. Allows this organism to utilize ethanolamine as the sole source of nitrogen and carbon in the presence of external vitamin B12. The protein is Ethanolamine ammonia-lyase small subunit of Escherichia coli (strain SE11).